Here is a 477-residue protein sequence, read N- to C-terminus: Tripartite motif-containing protein 72 (477 aa).

Residues Cys-14, Cys-17, Cys-29, His-31, Cys-34, Cys-37, Cys-53, Cys-56, Cys-86, His-89, Cys-97, Asp-100, Cys-105, Cys-108, His-114, and His-117 each contribute to the Zn(2+) site. The RING-type zinc-finger motif lies at 14–57; it reads CPLCLQLFDAPVTAECGHSFCRACLGRVAGEPAADGTVLCPCCQ. The B box-type zinc-finger motif lies at 81-122; that stretch reads VPQGHCEEHLDPLSIYCEQDRALVCGVCASLGSHRGHRLLPA. Positions 135–232 form a coiled coil; the sequence is QQKLQLQEAC…EKVLEEVADK (98 aa). An S-nitrosocysteine modification is found at Cys-144. Ser-255 bears the Phosphoserine mark. Positions 271 to 475 constitute a B30.2/SPRY domain; sequence DFKFQVWRKM…PLLLVGPEGA (205 aa).

The protein belongs to the TRIM/RBCC family. In terms of assembly, homodimer. Homooligomer; disulfide-linked. Oligomerizes on the phospholipid membrane. Interacts with DYSF and CAV3. Post-translationally, disulfide bond formation at Cys-242 occurs in case of membrane damage that cause the entry of the oxidized milieu of the extracellular space, resulting in homooligomerization. S-nitrosylation at Cys-144 stabilizes TRIM72 and protects against oxidation-induced protein degradation and cell death.

Its subcellular location is the cell membrane. The protein resides in the sarcolemma. It localises to the cytoplasmic vesicle membrane. The enzyme catalyses S-ubiquitinyl-[E2 ubiquitin-conjugating enzyme]-L-cysteine + [acceptor protein]-L-lysine = [E2 ubiquitin-conjugating enzyme]-L-cysteine + N(6)-ubiquitinyl-[acceptor protein]-L-lysine.. Its pathway is protein modification; protein ubiquitination. Specifically binds phosphatidylserine. The binding to phospholipids enhances ubiquitination activity. In terms of biological role, muscle-specific E3 ubiquitin-protein ligase that plays a central role in cell membrane repair by nucleating the assembly of the repair machinery at injury sites. Its ubiquitination activity is mediated by E2 ubiquitin-conjugating enzymes UBE2D1, UBE2D2 and UBE2D3. Acts as a sensor of oxidation: upon membrane damage, entry of extracellular oxidative environment results in disulfide bond formation and homooligomerization at the injury site. This oligomerization acts as a nucleation site for recruitment of TRIM72-containing vesicles to the injury site, leading to membrane patch formation. Probably acts upstream of the Ca(2+)-dependent membrane resealing process. Required for transport of DYSF to sites of cell injury during repair patch formation. Regulates membrane budding and exocytosis. May be involved in the regulation of the mobility of KCNB1-containing endocytic vesicles. In Homo sapiens (Human), this protein is Tripartite motif-containing protein 72.